The following is a 440-amino-acid chain: tRNA(Ile)-lysidine synthase (440 aa).

25–30 (SGGVDS) is a binding site for ATP.

This sequence belongs to the tRNA(Ile)-lysidine synthase family.

The protein localises to the cytoplasm. It carries out the reaction cytidine(34) in tRNA(Ile2) + L-lysine + ATP = lysidine(34) in tRNA(Ile2) + AMP + diphosphate + H(+). In terms of biological role, ligates lysine onto the cytidine present at position 34 of the AUA codon-specific tRNA(Ile) that contains the anticodon CAU, in an ATP-dependent manner. Cytidine is converted to lysidine, thus changing the amino acid specificity of the tRNA from methionine to isoleucine. The protein is tRNA(Ile)-lysidine synthase of Vibrio cholerae serotype O1 (strain ATCC 39541 / Classical Ogawa 395 / O395).